A 274-amino-acid polypeptide reads, in one-letter code: Eukaryotic translation initiation factor 3 subunit G (274 aa).

A phosphoserine mark is found at serine 146, serine 164, and serine 171. Residues 149–170 (ANTSAAATPEPDTDASGKYVPP) form a disordered region. The region spanning 191–270 (TTLKISQLNT…LILHLEWPKK (80 aa)) is the RRM domain.

It belongs to the eIF-3 subunit G family. Component of the eukaryotic translation initiation factor 3 (eIF-3) complex.

It localises to the cytoplasm. In terms of biological role, RNA-binding component of the eukaryotic translation initiation factor 3 (eIF-3) complex, which is involved in protein synthesis of a specialized repertoire of mRNAs and, together with other initiation factors, stimulates binding of mRNA and methionyl-tRNAi to the 40S ribosome. The eIF-3 complex specifically targets and initiates translation of a subset of mRNAs involved in cell proliferation. This subunit can bind 18S rRNA. The chain is Eukaryotic translation initiation factor 3 subunit G from Meyerozyma guilliermondii (strain ATCC 6260 / CBS 566 / DSM 6381 / JCM 1539 / NBRC 10279 / NRRL Y-324) (Yeast).